Reading from the N-terminus, the 95-residue chain is Aspartyl/glutamyl-tRNA(Asn/Gln) amidotransferase subunit C (95 aa).

It belongs to the GatC family. In terms of assembly, heterotrimer of A, B and C subunits.

It catalyses the reaction L-glutamyl-tRNA(Gln) + L-glutamine + ATP + H2O = L-glutaminyl-tRNA(Gln) + L-glutamate + ADP + phosphate + H(+). The enzyme catalyses L-aspartyl-tRNA(Asn) + L-glutamine + ATP + H2O = L-asparaginyl-tRNA(Asn) + L-glutamate + ADP + phosphate + 2 H(+). Allows the formation of correctly charged Asn-tRNA(Asn) or Gln-tRNA(Gln) through the transamidation of misacylated Asp-tRNA(Asn) or Glu-tRNA(Gln) in organisms which lack either or both of asparaginyl-tRNA or glutaminyl-tRNA synthetases. The reaction takes place in the presence of glutamine and ATP through an activated phospho-Asp-tRNA(Asn) or phospho-Glu-tRNA(Gln). This is Aspartyl/glutamyl-tRNA(Asn/Gln) amidotransferase subunit C from Allorhizobium ampelinum (strain ATCC BAA-846 / DSM 112012 / S4) (Agrobacterium vitis (strain S4)).